A 371-amino-acid chain; its full sequence is tRNA-specific 2-thiouridylase MnmA (371 aa).

ATP contacts are provided by residues Ala24–Ser31 and Leu50. The Nucleophile role is filled by Cys119. Cys119 and Cys215 form a disulfide bridge. Gly143 serves as a coordination point for ATP. Residues Lys165 to Gln167 form an interaction with tRNA region. Cys215 (cysteine persulfide intermediate) is an active-site residue.

This sequence belongs to the MnmA/TRMU family.

It is found in the cytoplasm. The enzyme catalyses S-sulfanyl-L-cysteinyl-[protein] + uridine(34) in tRNA + AH2 + ATP = 2-thiouridine(34) in tRNA + L-cysteinyl-[protein] + A + AMP + diphosphate + H(+). Functionally, catalyzes the 2-thiolation of uridine at the wobble position (U34) of tRNA, leading to the formation of s(2)U34. The polypeptide is tRNA-specific 2-thiouridylase MnmA (Neorickettsia sennetsu (strain ATCC VR-367 / Miyayama) (Ehrlichia sennetsu)).